The primary structure comprises 248 residues: PF03932 family protein CutC (248 aa).

It belongs to the CutC family. Homodimer.

The protein resides in the cytoplasm. This is PF03932 family protein CutC from Escherichia coli O7:K1 (strain IAI39 / ExPEC).